Consider the following 326-residue polypeptide: Transposase InsH for insertion sequence element IS5H (326 aa).

The protein belongs to the transposase 11 family.

Involved in the transposition of the insertion sequence IS5. This chain is Transposase InsH for insertion sequence element IS5H (insH6), found in Escherichia coli (strain K12).